The sequence spans 447 residues: Probable glycine dehydrogenase (decarboxylating) subunit 1 (447 aa).

Belongs to the GcvP family. N-terminal subunit subfamily. In terms of assembly, the glycine cleavage system is composed of four proteins: P, T, L and H. In this organism, the P 'protein' is a heterodimer of two subunits.

The catalysed reaction is N(6)-[(R)-lipoyl]-L-lysyl-[glycine-cleavage complex H protein] + glycine + H(+) = N(6)-[(R)-S(8)-aminomethyldihydrolipoyl]-L-lysyl-[glycine-cleavage complex H protein] + CO2. Functionally, the glycine cleavage system catalyzes the degradation of glycine. The P protein binds the alpha-amino group of glycine through its pyridoxal phosphate cofactor; CO(2) is released and the remaining methylamine moiety is then transferred to the lipoamide cofactor of the H protein. The sequence is that of Probable glycine dehydrogenase (decarboxylating) subunit 1 from Bacillus cytotoxicus (strain DSM 22905 / CIP 110041 / 391-98 / NVH 391-98).